Reading from the N-terminus, the 224-residue chain is Casparian strip membrane protein 3 (224 aa).

Positions 1 to 30 (MESKKEGVASAPTSPESRRTRSNGKGKTIA) are disordered. Residues 1–57 (MESKKEGVASAPTSPESRRTRSNGKGKTIAEATPPSVTVVSTKVTPSPRGGWRKGAA) are Cytoplasmic-facing. The helical transmembrane segment at 58–78 (ILDFILRLGAISSAIGAAAVM) threads the bilayer. The Extracellular segment spans residues 79-105 (GNNEQILPFFTQFFQFHVQWDDFPMFQ). A helical membrane pass occupies residues 106 to 126 (FFVFANGAAVVFLILSLPFSI). Residues 127–138 (VCIVRPFAVGPR) are Cytoplasmic-facing. Residues 139–159 (LLLVIVDIFAMALVIAAASAA) form a helical membrane-spanning segment. The Extracellular segment spans residues 160 to 191 (AAVVYLAHNGSQDANWIAICQQYTDFCQVTSQ). A glycan (N-linked (GlcNAc...) asparagine) is linked at Asn-168. The helical transmembrane segment at 192–212 (AVVASFVAAVFLICLIVLSSV) threads the bilayer. At 213 to 224 (ALKKGLKREFGW) the chain is on the cytoplasmic side.

The protein belongs to the Casparian strip membrane proteins (CASP) family. As to quaternary structure, homodimer and heterodimers.

It is found in the cell membrane. Regulates membrane-cell wall junctions and localized cell wall deposition. Required for establishment of the Casparian strip membrane domain (CSD) and the subsequent formation of Casparian strips, a cell wall modification of the root endodermis that determines an apoplastic barrier between the intraorganismal apoplasm and the extraorganismal apoplasm and prevents lateral diffusion. This is Casparian strip membrane protein 3 from Vigna unguiculata (Cowpea).